A 92-amino-acid polypeptide reads, in one-letter code: MARSLKKGPYVDLHLLKKVDAVRASNDKRPIKTWSRRSTILPDFIGLTIAVHNGRTHVPVFISDNMVGHKLGEFSLTRTFKGHLADKKAKKK.

It belongs to the universal ribosomal protein uS19 family.

Protein S19 forms a complex with S13 that binds strongly to the 16S ribosomal RNA. The sequence is that of Small ribosomal subunit protein uS19 from Neisseria gonorrhoeae (strain ATCC 700825 / FA 1090).